An 892-amino-acid chain; its full sequence is Putative disease resistance protein At4g10780 (892 aa).

Residues 24–63 (SLGNYIHKLKDNIVALEKAIEDLTATRDDVLRRVQMEEGK) adopt a coiled-coil conformation. The 304-residue stretch at 137–440 (IVAAPAPKLE…ICEGFIDGNI (304 aa)) folds into the NB-ARC domain. 180–187 (GMGGVGKT) is an ATP binding site. 6 LRR repeats span residues 515–536 (AVRR…PECP), 537–559 (ELTT…FFRH), 562–584 (KLVV…ISEL), 586–608 (ALRY…QDLK), 609–631 (TLIH…SKLS), and 632–654 (SLRT…KELH).

The protein belongs to the disease resistance NB-LRR family.

In terms of biological role, potential disease resistance protein. The chain is Putative disease resistance protein At4g10780 from Arabidopsis thaliana (Mouse-ear cress).